Consider the following 279-residue polypeptide: Dermonecrotic toxin LrSicTox-alphaIA1i (279 aa).

His11 is an active-site residue. Mg(2+)-binding residues include Glu31 and Asp33. His47 functions as the Nucleophile in the catalytic mechanism. Intrachain disulfides connect Cys51/Cys57 and Cys53/Cys196. Residue Asp91 coordinates Mg(2+). The N-linked (GlcNAc...) asparagine glycan is linked to Asn256.

It belongs to the arthropod phospholipase D family. Class II subfamily. The cofactor is Mg(2+). As to expression, expressed by the venom gland.

Its subcellular location is the secreted. It carries out the reaction an N-(acyl)-sphingosylphosphocholine = an N-(acyl)-sphingosyl-1,3-cyclic phosphate + choline. The catalysed reaction is an N-(acyl)-sphingosylphosphoethanolamine = an N-(acyl)-sphingosyl-1,3-cyclic phosphate + ethanolamine. The enzyme catalyses a 1-acyl-sn-glycero-3-phosphocholine = a 1-acyl-sn-glycero-2,3-cyclic phosphate + choline. It catalyses the reaction a 1-acyl-sn-glycero-3-phosphoethanolamine = a 1-acyl-sn-glycero-2,3-cyclic phosphate + ethanolamine. Inhibited with low affinity by edelfosine. In terms of biological role, dermonecrotic toxins cleave the phosphodiester linkage between the phosphate and headgroup of certain phospholipids (sphingolipid and lysolipid substrates), forming an alcohol (often choline) and a cyclic phosphate. This toxin acts on sphingomyelin (SM). It also acts on a broad range of lysophospholipids, like lysophosphatidylinositol (LPI), lysophosphatidylglycerol (LPG), lysophosphatidylethanolamine (LPE), lysobisphosphatidic acid (LBPA), lysophosphatidylserine (LPS) and lysophosphatidylcholines (LPC) of varying chain lengths. The substrate preference is LPI &gt; LPG &gt; LPS &gt; LPC &gt;&gt; LPE, LBPA. Furthermore, the enzyme also act on cyclic phosphatidic acid and lyso-platelet activating factor (LPAF, an alkyl-LPC). The enzyme does not act on sphingosylphosphorylcholine (SPC, also known as lyso-sphingomyelin) and PAF. The toxin may also act on ceramide phosphoethanolamine (CPE). It acts by transphosphatidylation, releasing exclusively cyclic phosphate products as second products. It does not exhibit detectable PLA1/2 activity. It induces dose-dependent hemolysis and dermonecrosis. Also induces increased vascular permeability, edema, inflammatory response, and platelet aggregation. In Loxosceles reclusa (Brown recluse spider), this protein is Dermonecrotic toxin LrSicTox-alphaIA1i.